The sequence spans 344 residues: F17d-G fimbrial adhesin (344 aa).

An N-terminal signal peptide occupies residues 1–22 (MTNFYKVFLAVFILVCCNISQA). Residues 23–199 (AVSFIGSTEN…SLNPFTLNDT (177 aa)) are receptor-binding lectin domain. Residues 65 to 66 (AN), 110 to 111 (DT), and 139 to 142 (STQG) contribute to the a carbohydrate site. C75 and C132 are oxidised to a cystine. The interval 200-344 (VTSCRLLTPS…GISTFTFSYQ (145 aa)) is fimbrillin-binding domain. Residues 288–308 (LKFGPDSPVKGNENQWQLSTG) form a disordered region. Over residues 299–308 (NENQWQLSTG) the composition is skewed to polar residues.

Belongs to the fimbrial protein family.

The protein localises to the fimbrium. Its function is as follows. Essential fimbrial adhesion factor that mediates binding to N-acetylglucosamine-containing receptors in the host intestinal microvilli, leading to colonization of the intestinal tissue, and diarrhea or septicemia. Also confers adhesiveness to laminin and basement membranes. This chain is F17d-G fimbrial adhesin (f17dG), found in Escherichia coli.